We begin with the raw amino-acid sequence, 1375 residues long: Probable GMP synthase [glutamine-hydrolyzing] (1375 aa).

Residues 7–119 enclose the Glutamine amidotransferase type-1; first part domain; the sequence is QILVLDFGSQ…VLEIMESSQD (113 aa). Cysteine 84 (nucleophile) is an active-site residue. Residues 120-500 form an insert-1 region; that stretch reads SKDSSCFAFQ…NNATQGFKSC (381 aa). N-acetyltransferase domains are found at residues 141-300 and 318-484; these read LSFD…KALE and VFLR…LEKK. The region spanning 501–580 is the Glutamine amidotransferase type-1; second part domain; the sequence is SLFKGIKQDS…AVGICGANTC (80 aa). Residues histidine 554 and glutamate 556 contribute to the active site. The segment at 597–1071 is insert-2; sequence IVYGGKAHCE…SGVANSLKIT (475 aa). Residues 612 to 765 form the N-acetyltransferase 3 domain; that stretch reads MQIQEAFKHI…ELIPLSIARE (154 aa). The interval 1011 to 1036 is disordered; it reads RIVDSQHTESSDIKGQSHLESSADSG. Positions 1014–1027 are enriched in basic and acidic residues; it reads DSQHTESSDIKGQS. Residues 1055 to 1250 enclose the GMPS ATP-PPase domain; sequence YLEGNDRSGV…LGMPESMLMR (196 aa). An ATP-binding site is contributed by 1083–1089; that stretch reads SGGVDSS.

Homodimer.

It catalyses the reaction XMP + L-glutamine + ATP + H2O = GMP + L-glutamate + AMP + diphosphate + 2 H(+). Its pathway is purine metabolism; GMP biosynthesis; GMP from XMP (L-Gln route): step 1/1. In terms of biological role, catalyzes the synthesis of GMP from XMP. The chain is Probable GMP synthase [glutamine-hydrolyzing] (guaA) from Helicobacter hepaticus (strain ATCC 51449 / 3B1).